A 281-amino-acid polypeptide reads, in one-letter code: Alcohol dehydrogenase-related 31 kDa protein (281 aa).

Residue 11-34 (YVADCGGIALETSKVLMTKNIAKL) coordinates NAD(+). Residue Ser139 participates in substrate binding. Catalysis depends on Tyr152, which acts as the Proton acceptor.

The protein belongs to the short-chain dehydrogenases/reductases (SDR) family.

The chain is Alcohol dehydrogenase-related 31 kDa protein (Adhr) from Drosophila ambigua (Fruit fly).